Consider the following 417-residue polypeptide: Serine hydroxymethyltransferase (417 aa).

(6S)-5,6,7,8-tetrahydrofolate is bound by residues Leu120 and 124–126 (GHL). Lys229 bears the N6-(pyridoxal phosphate)lysine mark. A (6S)-5,6,7,8-tetrahydrofolate-binding site is contributed by 354–356 (SPF).

The protein belongs to the SHMT family. As to quaternary structure, homodimer. Pyridoxal 5'-phosphate is required as a cofactor.

The protein resides in the cytoplasm. The enzyme catalyses (6R)-5,10-methylene-5,6,7,8-tetrahydrofolate + glycine + H2O = (6S)-5,6,7,8-tetrahydrofolate + L-serine. It participates in one-carbon metabolism; tetrahydrofolate interconversion. The protein operates within amino-acid biosynthesis; glycine biosynthesis; glycine from L-serine: step 1/1. Catalyzes the reversible interconversion of serine and glycine with tetrahydrofolate (THF) serving as the one-carbon carrier. This reaction serves as the major source of one-carbon groups required for the biosynthesis of purines, thymidylate, methionine, and other important biomolecules. Also exhibits THF-independent aldolase activity toward beta-hydroxyamino acids, producing glycine and aldehydes, via a retro-aldol mechanism. In Acinetobacter baylyi (strain ATCC 33305 / BD413 / ADP1), this protein is Serine hydroxymethyltransferase.